The following is a 372-amino-acid chain: MSKKDYYDLLEVGRNASIDEIKKAYKKLALRYHPDRNPGNQEAEEKFKEVTAAYEVLSDSEKRAGYDRYGHEGASGGFQGFSSAGDFSDIFNDFFGGGFGGGASRSRAKRSTTGVSGADLRYDLEITLEDAFKGIQAPIHYVTNVKCDTCQGTGGEGAIKPVQCHTCQGSGRIRTQQGFFTIERTCTTCYGEGEIIQNKCKKCGGSGRRRDEVNISVSIPKGIEEGAKVRISGKGEAGTKGGKSGDLYVYVKIIFHKIFARNKADLHCKVPIRMTLAVLGGEIDIQSIDGAKIKVKVPEGTQTGTKLRCREKGMPYMNSHARGDLYVQVIVETLNPKNLTKKQIELLKALEEEENASVQQQSEGFFSKVKKK.

Residues 5–70 (DYYDLLEVGR…EKRAGYDRYG (66 aa)) enclose the J domain. The segment at 134–212 (GIQAPIHYVT…CGGSGRRRDE (79 aa)) adopts a CR-type zinc-finger fold. Zn(2+) contacts are provided by C147, C150, C164, C167, C186, C189, C200, and C203. CXXCXGXG motif repeat units follow at residues 147-154 (CDTCQGTG), 164-171 (CHTCQGSG), 186-193 (CTTCYGEG), and 200-207 (CKKCGGSG).

The protein belongs to the DnaJ family. In terms of assembly, homodimer. Zn(2+) is required as a cofactor.

It is found in the cytoplasm. Participates actively in the response to hyperosmotic and heat shock by preventing the aggregation of stress-denatured proteins and by disaggregating proteins, also in an autonomous, DnaK-independent fashion. Unfolded proteins bind initially to DnaJ; upon interaction with the DnaJ-bound protein, DnaK hydrolyzes its bound ATP, resulting in the formation of a stable complex. GrpE releases ADP from DnaK; ATP binding to DnaK triggers the release of the substrate protein, thus completing the reaction cycle. Several rounds of ATP-dependent interactions between DnaJ, DnaK and GrpE are required for fully efficient folding. Also involved, together with DnaK and GrpE, in the DNA replication of plasmids through activation of initiation proteins. This Wolbachia pipientis wMel protein is Chaperone protein DnaJ.